The primary structure comprises 119 residues: C-C motif chemokine 24 (119 aa).

The N-terminal stretch at Met-1–Ser-26 is a signal peptide. 2 disulfide bridges follow: Cys-33/Cys-58 and Cys-34/Cys-74. N-linked (GlcNAc...) asparagine glycans are attached at residues Asn-54 and Asn-115.

The protein belongs to the intercrine beta (chemokine CC) family.

It is found in the secreted. Its function is as follows. Chemotactic for resting T-lymphocytes, and eosinophils. Has lower chemotactic activity for neutrophils but none for monocytes and activated lymphocytes. Is a strong suppressor of colony formation by a multipotential hematopoietic progenitor cell line. Binds to CCR3. The protein is C-C motif chemokine 24 of Canis lupus familiaris (Dog).